Reading from the N-terminus, the 302-residue chain is Cyclopropane mycolic acid synthase 2 (302 aa).

S-adenosyl-L-methionine contacts are provided by residues Y41–S42, L76–G84, T102–Q107, and W131–E132. Residue C284 is part of the active site.

It belongs to the CFA/CMAS family. Homodimer.

Its subcellular location is the cytoplasm. The catalysed reaction is a 1-acyl-2-(9Z)-enoyl-sn-glycero-3-phospholipid + S-adenosyl-L-methionine = a 1-acyl-2-(9-cyclopronane)-acyl-sn-glycero-3-phospholipid + S-adenosyl-L-homocysteine + H(+). Its pathway is lipid metabolism; mycolic acid biosynthesis. In terms of biological role, catalyzes the formation of trans cyclopropanated ketomycolate or methoxymycolate through the conversion of a double bond to a cyclopropane ring at the proximal position of an oxygenated mycolic acid via the transfer of a methylene group from S-adenosyl-L-methionine. In the absence of MmaA2, CmaA2 has a non-specific cis-cyclopropanating activity and is able to catalyze the conversion of a double bond to a cis cyclopropane ring at the distal position of an alpha mycolic acid. Cyclopropanated mycolic acids are key factors participating in cell envelope permeability, host immunomodulation and persistence. The sequence is that of Cyclopropane mycolic acid synthase 2 (cmaA2) from Mycobacterium bovis (strain ATCC BAA-935 / AF2122/97).